Consider the following 369-residue polypeptide: Lipoyl synthase, mitochondrial (369 aa).

Residues 1 to 32 (MLTKGVRALAWSPRRYITLDAEAAKPVVAKRR) constitute a mitochondrion transit peptide. [4Fe-4S] cluster-binding residues include C106, C111, C117, C136, C140, C143, and S351. The 220-residue stretch at 121–340 (NKGSATATIM…KEKALELGFL (220 aa)) folds into the Radical SAM core domain.

The protein belongs to the radical SAM superfamily. Lipoyl synthase family. [4Fe-4S] cluster serves as cofactor.

It localises to the mitochondrion. The enzyme catalyses [[Fe-S] cluster scaffold protein carrying a second [4Fe-4S](2+) cluster] + N(6)-octanoyl-L-lysyl-[protein] + 2 oxidized [2Fe-2S]-[ferredoxin] + 2 S-adenosyl-L-methionine + 4 H(+) = [[Fe-S] cluster scaffold protein] + N(6)-[(R)-dihydrolipoyl]-L-lysyl-[protein] + 4 Fe(3+) + 2 hydrogen sulfide + 2 5'-deoxyadenosine + 2 L-methionine + 2 reduced [2Fe-2S]-[ferredoxin]. The protein operates within protein modification; protein lipoylation via endogenous pathway; protein N(6)-(lipoyl)lysine from octanoyl-[acyl-carrier-protein]: step 2/2. Catalyzes the radical-mediated insertion of two sulfur atoms into the C-6 and C-8 positions of the octanoyl moiety bound to the lipoyl domains of lipoate-dependent enzymes, thereby converting the octanoylated domains into lipoylated derivatives. The sequence is that of Lipoyl synthase, mitochondrial from Eremothecium gossypii (strain ATCC 10895 / CBS 109.51 / FGSC 9923 / NRRL Y-1056) (Yeast).